A 189-amino-acid polypeptide reads, in one-letter code: Probable nicotinate-nucleotide adenylyltransferase (189 aa).

The protein belongs to the NadD family.

The catalysed reaction is nicotinate beta-D-ribonucleotide + ATP + H(+) = deamido-NAD(+) + diphosphate. It participates in cofactor biosynthesis; NAD(+) biosynthesis; deamido-NAD(+) from nicotinate D-ribonucleotide: step 1/1. Its function is as follows. Catalyzes the reversible adenylation of nicotinate mononucleotide (NaMN) to nicotinic acid adenine dinucleotide (NaAD). This is Probable nicotinate-nucleotide adenylyltransferase from Bacillus licheniformis (strain ATCC 14580 / DSM 13 / JCM 2505 / CCUG 7422 / NBRC 12200 / NCIMB 9375 / NCTC 10341 / NRRL NRS-1264 / Gibson 46).